A 216-amino-acid polypeptide reads, in one-letter code: Probable transaldolase (216 aa).

The active-site Schiff-base intermediate with substrate is the lysine 83.

The protein belongs to the transaldolase family. Type 3B subfamily.

Its subcellular location is the cytoplasm. It catalyses the reaction D-sedoheptulose 7-phosphate + D-glyceraldehyde 3-phosphate = D-erythrose 4-phosphate + beta-D-fructose 6-phosphate. Its pathway is carbohydrate degradation; pentose phosphate pathway; D-glyceraldehyde 3-phosphate and beta-D-fructose 6-phosphate from D-ribose 5-phosphate and D-xylulose 5-phosphate (non-oxidative stage): step 2/3. Functionally, transaldolase is important for the balance of metabolites in the pentose-phosphate pathway. The polypeptide is Probable transaldolase (Thermosipho africanus (strain TCF52B)).